The primary structure comprises 540 residues: Raucaffricine-O-beta-D-glucosidase (540 aa).

Residues Gln-36, His-140, and 185-186 (NE) each bind a beta-D-glucoside. The active-site Proton donor is the Glu-186. A disulfide bridge connects residues Cys-221 and Cys-230. A beta-D-glucoside contacts are provided by residues Tyr-347, Glu-420, Trp-469, 476-477 (EW), and Phe-485. Catalysis depends on Glu-420, which acts as the Nucleophile.

It belongs to the glycosyl hydrolase 1 family.

The enzyme catalyses raucaffricine + H2O = vomilenine + D-glucose. The catalysed reaction is vomilenine + UDP-alpha-D-glucose = raucaffricine + UDP + H(+). In terms of biological role, glucosidase specifically involved in alkaloid biosynthesis leading to the accumulation of several alkaloids, including ajmaline, an important plant-derived pharmaceutical used in the treatment of heart disorders. This Rauvolfia serpentina (Serpentine wood) protein is Raucaffricine-O-beta-D-glucosidase.